A 225-amino-acid chain; its full sequence is MTPRLRLQPESVGIGMTSQRVRDRLVERLREAGIQDESTLNAMRTVPRHLFIDEALASRAYEDTALPIGHGQTISQPWVVARMTEAVLQVAPTKVLEVGTGSGYQGAILAALGLEVYTVERIGDLLRQARKRFRHLGMNVRSKHDDGRIGWPEHGPYDAIVVTAAAPALVDALIDQLAVGGRLVAPVGGASSQSLVQLTRGADGAIEQQVLAPVTFVPLLSGMLD.

Ser75 is a catalytic residue.

It belongs to the methyltransferase superfamily. L-isoaspartyl/D-aspartyl protein methyltransferase family.

The protein resides in the cytoplasm. It catalyses the reaction [protein]-L-isoaspartate + S-adenosyl-L-methionine = [protein]-L-isoaspartate alpha-methyl ester + S-adenosyl-L-homocysteine. Catalyzes the methyl esterification of L-isoaspartyl residues in peptides and proteins that result from spontaneous decomposition of normal L-aspartyl and L-asparaginyl residues. It plays a role in the repair and/or degradation of damaged proteins. The sequence is that of Protein-L-isoaspartate O-methyltransferase from Xanthomonas axonopodis pv. citri (strain 306).